Consider the following 270-residue polypeptide: MNVEKLKKMKGKEKIVMVTAYDAPSARIARDAGIDVILVGDSLGNNVLGYENTIPVTMEEMLIHVAAVKRGAPDAFIVADMPFLSYQTSVEKAVENAGKFLKVGANAVKIEGGEEFGELVQKLVESGIPVMGHIGLTPQFVNRFGGYRVQGKTEKNREYLLRSARELEKRGAFAIVLELVVEEVAKEITESVSIPTIGIGSGRFCDGQVLVWHDLLGLNPDFAPRFSKKYANLYEVILKALQEFRREVKEGLFPTEEHSFTDKSKGGVSS.

Mg(2+)-binding residues include Asp41 and Asp80. Residues 41–42, Asp80, and Lys109 each bind 3-methyl-2-oxobutanoate; that span reads DS. Glu111 is a Mg(2+) binding site. The Proton acceptor role is filled by Glu178.

Belongs to the PanB family. In terms of assembly, homodecamer; pentamer of dimers. The cofactor is Mg(2+).

Its subcellular location is the cytoplasm. It carries out the reaction 3-methyl-2-oxobutanoate + (6R)-5,10-methylene-5,6,7,8-tetrahydrofolate + H2O = 2-dehydropantoate + (6S)-5,6,7,8-tetrahydrofolate. It participates in cofactor biosynthesis; (R)-pantothenate biosynthesis; (R)-pantoate from 3-methyl-2-oxobutanoate: step 1/2. Functionally, catalyzes the reversible reaction in which hydroxymethyl group from 5,10-methylenetetrahydrofolate is transferred onto alpha-ketoisovalerate to form ketopantoate. This Thermotoga sp. (strain RQ2) protein is 3-methyl-2-oxobutanoate hydroxymethyltransferase.